Reading from the N-terminus, the 357-residue chain is Histidinol-phosphate aminotransferase 1 (357 aa).

The residue at position 210 (Lys-210) is an N6-(pyridoxal phosphate)lysine.

The protein belongs to the class-II pyridoxal-phosphate-dependent aminotransferase family. Histidinol-phosphate aminotransferase subfamily. In terms of assembly, homodimer. Pyridoxal 5'-phosphate is required as a cofactor.

The catalysed reaction is L-histidinol phosphate + 2-oxoglutarate = 3-(imidazol-4-yl)-2-oxopropyl phosphate + L-glutamate. It functions in the pathway amino-acid biosynthesis; L-histidine biosynthesis; L-histidine from 5-phospho-alpha-D-ribose 1-diphosphate: step 7/9. The polypeptide is Histidinol-phosphate aminotransferase 1 (Methylococcus capsulatus (strain ATCC 33009 / NCIMB 11132 / Bath)).